Reading from the N-terminus, the 217-residue chain is HTH-type transcriptional regulator EthR (217 aa).

Positions 1 to 22 are disordered; that stretch reads MTTASQTRTPRGRRSARPSGDD. Residues 21–81 form the HTH tetR-type domain; the sequence is DDREAAILAT…SLIDPLIKRA (61 aa). A DNA-binding region (H-T-H motif) is located at residues 44–63; sequence SVDDLAKGAGISRPTFYFYF.

In terms of assembly, homodimer.

Functionally, involved in the repression of teh monooxygenase EthA which is responsible of the formation of the active metabolite of ethionamide (ETH). In Mycolicibacterium smegmatis (strain ATCC 700084 / mc(2)155) (Mycobacterium smegmatis), this protein is HTH-type transcriptional regulator EthR (ethR).